Consider the following 575-residue polypeptide: Probable cytochrome P450 514A1 (575 aa).

A helical transmembrane segment spans residues Ile4–Leu24. Cys448 contacts heme.

The protein belongs to the cytochrome P450 family. The cofactor is heme.

The protein resides in the membrane. In Dictyostelium discoideum (Social amoeba), this protein is Probable cytochrome P450 514A1 (cyp514A1).